We begin with the raw amino-acid sequence, 628 residues long: Neutral/alkaline invertase 1, mitochondrial (628 aa).

The N-terminal 35 residues, 1–35, are a transit peptide targeting the mitochondrion; sequence MAAAAISHLRRGAPRHARALLYLSTRRFSSSSAAG. The segment covering 79–90 has biased composition (low complexity); that stretch reads ASSAPPLESPPI. Residues 79-113 form a disordered region; that stretch reads ASSAPPLESPPIEELPDDATPPPEEEPGLPAPEKD.

It belongs to the glycosyl hydrolase 100 family. Expressed in roots, leaf and stems.

It is found in the mitochondrion. It catalyses the reaction Hydrolysis of terminal non-reducing beta-D-fructofuranoside residues in beta-D-fructofuranosides.. Mitochondrial invertase that cleaves sucrose into glucose and fructose. The polypeptide is Neutral/alkaline invertase 1, mitochondrial (Oryza sativa subsp. japonica (Rice)).